Here is a 197-residue protein sequence, read N- to C-terminus: Holliday junction branch migration complex subunit RuvA (197 aa).

The interval 1–64 (MYEYIKGKYI…EDFIGVYGFL (64 aa)) is domain I. The tract at residues 65–144 (TKDELSMFKL…DILEEDDEQI (80 aa)) is domain II. The segment at 145 to 149 (INKVA) is flexible linker. Positions 149–197 (ADDKKVLEAVAALVTLGYSEKEANKVINSCDKNNSLEQIIKEALKYLMK) are domain III.

The protein belongs to the RuvA family. In terms of assembly, homotetramer. Forms an RuvA(8)-RuvB(12)-Holliday junction (HJ) complex. HJ DNA is sandwiched between 2 RuvA tetramers; dsDNA enters through RuvA and exits via RuvB. An RuvB hexamer assembles on each DNA strand where it exits the tetramer. Each RuvB hexamer is contacted by two RuvA subunits (via domain III) on 2 adjacent RuvB subunits; this complex drives branch migration. In the full resolvosome a probable DNA-RuvA(4)-RuvB(12)-RuvC(2) complex forms which resolves the HJ.

It localises to the cytoplasm. The RuvA-RuvB-RuvC complex processes Holliday junction (HJ) DNA during genetic recombination and DNA repair, while the RuvA-RuvB complex plays an important role in the rescue of blocked DNA replication forks via replication fork reversal (RFR). RuvA specifically binds to HJ cruciform DNA, conferring on it an open structure. The RuvB hexamer acts as an ATP-dependent pump, pulling dsDNA into and through the RuvAB complex. HJ branch migration allows RuvC to scan DNA until it finds its consensus sequence, where it cleaves and resolves the cruciform DNA. This chain is Holliday junction branch migration complex subunit RuvA, found in Clostridium botulinum (strain ATCC 19397 / Type A).